The following is a 542-amino-acid chain: Probable quinate permease (542 aa).

The Cytoplasmic portion of the chain corresponds to 1–22 (MSILALVEDRPTPKEVYNWRIY). Residues 23–43 (LLAAVASFTSCMIGYDSAFIG) traverse the membrane as a helical segment. Residues 44–66 (TTLALSSFREEFGFNTMSKTAVN) lie on the Extracellular side of the membrane. The helical transmembrane segment at 67-87 (LVSANIVSCYQAGAFFGAFLA) threads the bilayer. The Cytoplasmic portion of the chain corresponds to 88–97 (YPVGHFWGRK). The chain crosses the membrane as a helical span at residues 98 to 118 (WGLLFSGAIFTLGAGLMLGAD). Over 119–130 (GDRGLGLLYGGR) the chain is Extracellular. The chain crosses the membrane as a helical span at residues 131–151 (VLAGLGVGAGSNITPIYISEM). The Cytoplasmic portion of the chain corresponds to 152-159 (APPSIRGR). The chain crosses the membrane as a helical span at residues 160–180 (LVGVYELGWQIGGLVGFWINY). At 181 to 193 (GVSETLAPSHKQW) the chain is on the extracellular side. A helical transmembrane segment spans residues 194–214 (IIPFAVQLIPSGLLLIGAVFL). Residues 215 to 285 (KESPRWLFSR…AGTNKKVMYR (71 aa)) lie on the Cytoplasmic side of the membrane. Residues 286-306 (LFLGSMLFFWQNGSGINAINY) form a helical membrane-spanning segment. Over 307 to 325 (YSPTVFKSIGLQGANTSMF) the chain is Extracellular. A helical membrane pass occupies residues 326–346 (STGIFGVVKTVVTFVWLLYLI). Over 347-352 (DRLGRR) the chain is Cytoplasmic. A helical transmembrane segment spans residues 353-373 (LLLLIGAAGASVCLFIVGAYI). Topologically, residues 374-387 (KIADPASNPTQEMT) are extracellular. The chain crosses the membrane as a helical span at residues 388 to 408 (GGGIAAMFFFYLYTVFYTPSW). Residues 409-456 (NGTPWVMNSEMFEPNMRSLAQACAAASNWFWNFLISRFTPQMFAKMEY) are Cytoplasmic-facing. The helical transmembrane segment at 457–477 (GVWFFFASLMVLSIVFVFFLL) threads the bilayer. Over 478–542 (PETKGIPLES…EHLSEDLPKV (65 aa)) the chain is Extracellular. A disordered region spans residues 519–542 (IEESGYSKTGDQQVEHLSEDLPKV). The segment covering 531-542 (QVEHLSEDLPKV) has biased composition (basic and acidic residues).

The protein belongs to the major facilitator superfamily. Sugar transporter (TC 2.A.1.1) family. As to quaternary structure, interacts with creB. Post-translationally, ubiquitinated. Deubiquitinated by creB, probably to control its activity or amount.

The protein localises to the cell membrane. In terms of biological role, integral membrane transporter that imports quinic acid to be catabolized as a carbon source. The sequence is that of Probable quinate permease (qutD) from Neosartorya fischeri (strain ATCC 1020 / DSM 3700 / CBS 544.65 / FGSC A1164 / JCM 1740 / NRRL 181 / WB 181) (Aspergillus fischerianus).